The following is a 377-amino-acid chain: Sodium-dependent organic anion transporter (377 aa).

Over 1–29 the chain is Extracellular; sequence MRANCSSGLACPANSSEEELPEGLKAFGN. Asn-4 carries an N-linked (GlcNAc...) asparagine glycan. The chain crosses the membrane as a helical span at residues 30 to 50; sequence LDLVFTVVSALMIGLLMFSLG. At 51–67 the chain is on the cytoplasmic side; that stretch reads CSVEVQKLWGHIRRPWG. The helical transmembrane segment at 68–88 threads the bilayer; sequence IAVGMLCQFGLMPLIAYLLII. The Extracellular segment spans residues 89–97; it reads SFSLKPLQA. The chain crosses the membrane as a helical span at residues 98-118; sequence IAVLIMGCCPGGTVSNIFTFW. Residues 119–133 are Cytoplasmic-facing; sequence VDGDMDLSISMTTCS. Residues 134 to 154 traverse the membrane as a helical segment; it reads TMAALGMMPLCLYLYTLSWNL. The Extracellular segment spans residues 155-159; sequence EQNLT. Residue Asn-157 is glycosylated (N-linked (GlcNAc...) asparagine). A helical transmembrane segment spans residues 160–180; that stretch reads IPYQNIGITLVCLIIPVAFGI. Residues 181-195 are Cytoplasmic-facing; sequence YVNYRWPKQSKIILK. The helical transmembrane segment at 196 to 216 threads the bilayer; the sequence is IGAIAGGLLFLVVTGAGMVLM. Over 217–223 the chain is Extracellular; that stretch reads KEFWSSD. Residues 224–244 traverse the membrane as a helical segment; sequence IILLMISFIFPLIGHATGFLL. Topologically, residues 245-257 are cytoplasmic; it reads ALLTHQSWQRCRT. A helical transmembrane segment spans residues 258-278; the sequence is ISLETGTQNVQMCFTMLQLSF. The Extracellular segment spans residues 279 to 285; that stretch reads TAEQLVQ. The helical transmembrane segment at 286–306 threads the bilayer; that stretch reads IFGFVLAYGLFQMLNGFFMVA. Residues 307-377 are Cytoplasmic-facing; that stretch reads AYKMYKRRLK…TPTGDIARAK (71 aa). The segment at 319-377 is disordered; it reads HGNEKPSCQEARHRKKSTSPKETTAFLEVNEEATLSPGPSGPVDPHGAPTPTGDIARAK.

It belongs to the bile acid:sodium symporter (BASS) (TC 2.A.28) family. Post-translationally, glycosylated.

It localises to the membrane. The catalysed reaction is estrone 3-sulfate(out) + 2 Na(+)(out) = estrone 3-sulfate(in) + 2 Na(+)(in). The enzyme catalyses 17beta-estradiol 3-sulfate(out) + 2 Na(+)(out) = 17beta-estradiol 3-sulfate(in) + 2 Na(+)(in). It carries out the reaction dehydroepiandrosterone 3-sulfate(out) + 2 Na(+)(out) = dehydroepiandrosterone 3-sulfate(in) + 2 Na(+)(in). It catalyses the reaction androst-5-ene-diol 3-sulfate(out) + 2 Na(+)(out) = androst-5-ene-diol 3-sulfate(in) + 2 Na(+)(in). The catalysed reaction is pregnenolone sulfate(out) + 2 Na(+)(out) = pregnenolone sulfate(in) + 2 Na(+)(in). The enzyme catalyses taurolithocholate 3-sulfate(out) + 2 Na(+)(out) = taurolithocholate 3-sulfate(in) + 2 Na(+)(in). It carries out the reaction androsterone 3alpha-sulfate(out) + 2 Na(+)(out) = androsterone 3alpha-sulfate(in) + 2 Na(+)(in). It catalyses the reaction 5alpha-dihydrotestosterone sulfate(out) + 2 Na(+)(out) = 5alpha-dihydrotestosterone sulfate(in) + 2 Na(+)(in). The catalysed reaction is 17beta-estradiol 17-sulfate(out) + 2 Na(+)(out) = 17beta-estradiol 17-sulfate(in) + 2 Na(+)(in). The enzyme catalyses 17alpha-hydroxypregnenolone 3-sulfate(out) + 2 Na(+)(out) = 17alpha-hydroxypregnenolone 3-sulfate(in) + 2 Na(+)(in). It carries out the reaction epiandrosterone 3-sulfate(out) + 2 Na(+)(out) = epiandrosterone 3-sulfate(in) + 2 Na(+)(in). It catalyses the reaction epitestosterone 17-sulfate(out) + 2 Na(+)(out) = epitestosterone 17-sulfate(in) + 2 Na(+)(in). The catalysed reaction is testosterone 17-sulfate(out) + 2 Na(+)(out) = testosterone 17-sulfate(in) + 2 Na(+)(in). The enzyme catalyses 16alpha-hydroxydehydroepiandrosterone 3-sulfate(out) + 2 Na(+)(out) = 16alpha-hydroxydehydroepiandrosterone 3-sulfate(in) + 2 Na(+)(in). In terms of biological role, transports sulfoconjugated steroid hormones from the extracellular compartment into the cytosol in a sodium-dependent manner without hydrolysis. Steroid sulfate hormones are commonly considered to be biologically inactive metabolites, that may be activated by steroid sulfatases into free steroids. May play an important role by delivering sulfoconjugated steroids to specific target cells in reproductive organs. May play a role transporting the estriol precursor 16alpha-hydroxydehydroepiandrosterone 3-sulfate (16a-OH-DHEAS) at the fetal blood vessel endothelium. Can also transport other sulfoconjugated molecules such as taurolithocholic acid-3-sulfate and sulfoconjugated pyrenes. The chain is Sodium-dependent organic anion transporter (SLC10A6) from Bos taurus (Bovine).